Reading from the N-terminus, the 159-residue chain is RNA pyrophosphohydrolase (159 aa).

Residues 6-149 (GFRPNVGIIL…KREVYRRALK (144 aa)) enclose the Nudix hydrolase domain. The short motif at 38-59 (GGINPDETPEDALYRELNEEVG) is the Nudix box element.

It belongs to the Nudix hydrolase family. RppH subfamily. A divalent metal cation is required as a cofactor.

In terms of biological role, accelerates the degradation of transcripts by removing pyrophosphate from the 5'-end of triphosphorylated RNA, leading to a more labile monophosphorylated state that can stimulate subsequent ribonuclease cleavage. This is RNA pyrophosphohydrolase from Pseudomonas fluorescens (strain ATCC BAA-477 / NRRL B-23932 / Pf-5).